Reading from the N-terminus, the 515-residue chain is Transcription termination factor Rho (515 aa).

The Rho RNA-BD domain occupies 146-221 (DVLFTGVLDV…VKIKSINDQD (76 aa)). ATP is bound by residues 264 to 269 (GKGQRA), 276 to 281 (KAGKTT), and R307.

Belongs to the Rho family. Homohexamer. The homohexamer assembles into an open ring structure.

Functionally, facilitates transcription termination by a mechanism that involves Rho binding to the nascent RNA, activation of Rho's RNA-dependent ATPase activity, and release of the mRNA from the DNA template. The chain is Transcription termination factor Rho from Borreliella burgdorferi (strain ATCC 35210 / DSM 4680 / CIP 102532 / B31) (Borrelia burgdorferi).